Here is a 599-residue protein sequence, read N- to C-terminus: Elongation factor 4 (599 aa).

Residues 4-186 (EHIRNFSIIA…EIVKKIPPPK (183 aa)) enclose the tr-type G domain. Residues 16 to 21 (DHGKST) and 133 to 136 (NKID) contribute to the GTP site.

The protein belongs to the TRAFAC class translation factor GTPase superfamily. Classic translation factor GTPase family. LepA subfamily.

Its subcellular location is the cell inner membrane. The catalysed reaction is GTP + H2O = GDP + phosphate + H(+). Functionally, required for accurate and efficient protein synthesis under certain stress conditions. May act as a fidelity factor of the translation reaction, by catalyzing a one-codon backward translocation of tRNAs on improperly translocated ribosomes. Back-translocation proceeds from a post-translocation (POST) complex to a pre-translocation (PRE) complex, thus giving elongation factor G a second chance to translocate the tRNAs correctly. Binds to ribosomes in a GTP-dependent manner. The polypeptide is Elongation factor 4 (Citrifermentans bemidjiense (strain ATCC BAA-1014 / DSM 16622 / JCM 12645 / Bem) (Geobacter bemidjiensis)).